The following is a 190-amino-acid chain: Tegument antigen (190 aa).

EF-hand domains follow at residues 8 to 43 and 51 to 77; these read SQMEEFIRAFLEIDADSNEMIDKQELIKYCQKYRLD and IARFDTDKDNKISIEEFCRGFGLKVSE. Positions 55, 57, 59, 61, and 66 each coordinate Ca(2+).

As to expression, adult and schistosomula tegument.

In Schistosoma mansoni (Blood fluke), this protein is Tegument antigen.